The primary structure comprises 130 residues: Small ribosomal subunit protein uS9 (130 aa).

The interval 111 to 130 is disordered; sequence VERKKPGLKKARKASQFSKR. The span at 116–130 shows a compositional bias: basic residues; that stretch reads PGLKKARKASQFSKR.

This sequence belongs to the universal ribosomal protein uS9 family.

This Lactococcus lactis subsp. lactis (strain IL1403) (Streptococcus lactis) protein is Small ribosomal subunit protein uS9.